Here is an 872-residue protein sequence, read N- to C-terminus: Cellulose synthase catalytic subunit [UDP-forming] (872 aa).

4 helical membrane passes run 30 to 50, 151 to 171, 173 to 193, and 230 to 250; these read SAFSATLGCFWMILAWIFIPL, ILGIIVTFSLILALICVTQPF, PLAQFIFLMLLWGGALIVRRM, and LVCGLILLFAETYAWIVLVLG. A catalytic subdomain A region spans residues 271–364; sequence LWPSVDIFVP…FVSIFDCDHV (94 aa). Asp313 is a catalytic residue. 2 residues coordinate substrate: Asp360 and Asp362. The catalytic subdomain B stretch occupies residues 441-501; it reads KPLDEIGGIA…GQRIRWARGM (61 aa). Residue Asp457 is part of the active site. 5 helical membrane-spanning segments follow: residues 525–545, 547–567, 592–612, 640–660, and 668–688; these read VNAMFHFLSGIPRLIFLTAPL, FLLLHAYIIYAPALMIALFVL, IYETVLAWYIAPPTLVALINP, IFLVLLNLVGVAVGIWRYFYG, and VVVSMVWVFYNLIVLGGAVAV. Residues 694–790 form the PilZ domain; the sequence is QVRRSHRVEM…QHIDFVQCTF (97 aa). The helical transmembrane segment at 833–853 threads the bilayer; sequence SVKGIFRVLTSLVSWVVSFIP.

It belongs to the glycosyltransferase 2 family. Requires Mg(2+) as cofactor.

Its subcellular location is the cell inner membrane. It catalyses the reaction [(1-&gt;4)-beta-D-glucosyl](n) + UDP-alpha-D-glucose = [(1-&gt;4)-beta-D-glucosyl](n+1) + UDP + H(+). It functions in the pathway glycan metabolism; bacterial cellulose biosynthesis. Activated by bis-(3'-5') cyclic diguanylic acid (c-di-GMP). Its function is as follows. Catalytic subunit of cellulose synthase. It polymerizes uridine 5'-diphosphate glucose to cellulose, which is produced as an extracellular component for mechanical and chemical protection at the onset of the stationary phase, when the cells exhibit multicellular behavior (rdar morphotype). Coexpression of cellulose and thin aggregative fimbriae leads to a hydrophobic network with tightly packed cells embedded in a highly inert matrix. The polypeptide is Cellulose synthase catalytic subunit [UDP-forming] (bcsA) (Escherichia coli O157:H7).